The sequence spans 264 residues: MTERSFDSFEVVENGLTEEQILQNPDCLISSHDENHPANVICKLCEQFFHNNWCTGTGGGISIKDPKTNYLYIAPSGVQKEKMKREDLFVLNETGDKCLRKPSMYKPSACTPLFLACYKLRNAGAIIHTHSQHAVMCSLIFKDVFRISNIEQIKAIPSGKIDPVTNKQIALSFFDTLEIPIIENMAHEDQLIDSFHDIFKRWPHTQAIIVRRHGIFVWGSDINKAKIYNEAIDYLMELAVKMYQIGIPPDCGIGEEKRYLEMPM.

Residue C110 coordinates substrate. Residues H128 and H130 each coordinate Zn(2+). The active-site Proton donor/acceptor is the E151. Residue H213 participates in Zn(2+) binding.

It belongs to the aldolase class II family. MtnB subfamily. Zn(2+) is required as a cofactor.

The protein resides in the cytoplasm. The enzyme catalyses 5-(methylsulfanyl)-D-ribulose 1-phosphate = 5-methylsulfanyl-2,3-dioxopentyl phosphate + H2O. Its pathway is amino-acid biosynthesis; L-methionine biosynthesis via salvage pathway; L-methionine from S-methyl-5-thio-alpha-D-ribose 1-phosphate: step 2/6. Functionally, catalyzes the dehydration of methylthioribulose-1-phosphate (MTRu-1-P) into 2,3-diketo-5-methylthiopentyl-1-phosphate (DK-MTP-1-P). In Vanderwaltozyma polyspora (strain ATCC 22028 / DSM 70294 / BCRC 21397 / CBS 2163 / NBRC 10782 / NRRL Y-8283 / UCD 57-17) (Kluyveromyces polysporus), this protein is Methylthioribulose-1-phosphate dehydratase.